The following is a 153-amino-acid chain: Interleukin-4 (153 aa).

An N-terminal signal peptide occupies residues 1–24; that stretch reads MGLTSQLLPPLFFLLACAGNFVHG. Intrachain disulfides connect C27-C151, C48-C89, and C70-C123. N-linked (GlcNAc...) asparagine glycosylation occurs at N62.

It belongs to the IL-4/IL-13 family.

The protein localises to the secreted. Its function is as follows. Participates in at least several B-cell activation processes as well as of other cell types. It is a costimulator of DNA-synthesis. It induces the expression of class II MHC molecules on resting B-cells. It enhances both secretion and cell surface expression of IgE and IgG1. It also regulates the expression of the low affinity Fc receptor for IgE (CD23) on both lymphocytes and monocytes. Positively regulates IL31RA expression in macrophages. Stimulates autophagy in dendritic cells by interfering with mTORC1 signaling and through the induction of RUFY4. The sequence is that of Interleukin-4 (IL4) from Macaca fascicularis (Crab-eating macaque).